The primary structure comprises 789 residues: GDH/6PGL endoplasmic bifunctional protein (789 aa).

A signal peptide spans 1–16 (MLLAAMCLALLGCLQA). The residue at position 17 (Q17) is a Pyrrolidone carboxylic acid. The interval 17 to 524 (QELKGHVSII…GGQLTFSQQQ (508 aa)) is hexose-6-phosphate dehydrogenase. NADP(+) contacts are provided by residues 29-36 (GATGDLAK) and Y146. An N-linked (GlcNAc...) asparagine glycan is attached at N154. K171 lines the NADP(+) pocket. D-glucose 6-phosphate-binding positions include K171, 201–205 (HYLGK), E240, and D259. At K205 the chain carries N6-succinyllysine. H264 serves as the catalytic Proton acceptor. N279 is a glycosylation site (N-linked (GlcNAc...) asparagine). 2 residues coordinate D-glucose 6-phosphate: K357 and R362. R367 lines the NADP(+) pocket. Position 424 is an N6-succinyllysine (K424). The linker stretch occupies residues 525–538 (LEVLIPDLGSVPKP). The interval 539-789 (SDFQVLGARY…WYMDYEAFLG (251 aa)) is 6-phosphogluconolactonase. W615 is a binding site for NADP(+). N681 carries an N-linked (GlcNAc...) asparagine glycan.

This sequence in the N-terminal section; belongs to the glucose-6-phosphate dehydrogenase family. In the C-terminal section; belongs to the glucosamine/galactosamine-6-phosphate isomerase family. 6-phosphogluconolactonase subfamily. Homodimer. Expressed in liver (at protein level). Expressed in muscles. Expressed in adipose tissues.

It is found in the endoplasmic reticulum lumen. It carries out the reaction D-glucose 6-phosphate + NAD(+) = 6-phospho-D-glucono-1,5-lactone + NADH + H(+). The catalysed reaction is D-glucose 6-phosphate + NADP(+) = 6-phospho-D-glucono-1,5-lactone + NADPH + H(+). It catalyses the reaction 6-phospho-D-glucono-1,5-lactone + H2O = 6-phospho-D-gluconate + H(+). The enzyme catalyses 2-deoxy-D-glucose 6-phosphate + NAD(+) = 2-deoxy-6-phospho-D-glucono-1,5-lactone + NADH + H(+). It carries out the reaction 2-deoxy-D-glucose 6-phosphate + NADP(+) = 2-deoxy-6-phospho-D-glucono-1,5-lactone + NADPH + H(+). The catalysed reaction is D-galactose 6-phosphate + NADP(+) = 6-phospho-D-galactono-1,5-lactone + NADPH + H(+). It catalyses the reaction D-galactose 6-phosphate + NAD(+) = 6-phospho-D-galactono-1,5-lactone + NADH + H(+). The enzyme catalyses D-glucosamine 6-phosphate + NADP(+) = 2-amino-2-deoxy-6-phospho-D-glucono-1,5-lactone + NADPH + 2 H(+). It carries out the reaction D-glucose + NAD(+) = D-glucono-1,5-lactone + NADH + H(+). The catalysed reaction is D-glucose + NADP(+) = D-glucono-1,5-lactone + NADPH + H(+). It catalyses the reaction D-glucose 6-sulfate + NADP(+) = 6-sulfo-D-glucono-1,5-lactone + NADPH + H(+). The protein operates within carbohydrate degradation; pentose phosphate pathway; D-ribulose 5-phosphate from D-glucose 6-phosphate (oxidative stage). Its pathway is carbohydrate degradation; pentose phosphate pathway; D-ribulose 5-phosphate from D-glucose 6-phosphate (oxidative stage): step 2/3. Functionally, bifunctional enzyme localized in the lumen of the endoplasmic reticulum that catalyzes the first two steps of the oxidative branch of the pentose phosphate pathway/shunt, an alternative to glycolysis and a major source of reducing power and metabolic intermediates for biosynthetic processes. Has a hexose-6-phosphate dehydrogenase activity, with broad substrate specificity compared to glucose-6-phosphate 1-dehydrogenase/G6PD, and catalyzes the first step of the pentose phosphate pathway. In addition, acts as a 6-phosphogluconolactonase and catalyzes the second step of the pentose phosphate pathway. May have a dehydrogenase activity for alternative substrates including glucosamine 6-phosphate and glucose 6-sulfate. The main function of this enzyme is to provide reducing equivalents such as NADPH to maintain the adequate levels of reductive cofactors in the oxidizing environment of the endoplasmic reticulum. By producing NADPH that is needed by reductases of the lumen of the endoplasmic reticulum like corticosteroid 11-beta-dehydrogenase isozyme 1/HSD11B1, indirectly regulates their activity. The polypeptide is GDH/6PGL endoplasmic bifunctional protein (Mus musculus (Mouse)).